The primary structure comprises 363 residues: 3-dehydroquinate synthase (363 aa).

Residues 70 to 75, 104 to 108, 128 to 129, Lys141, Lys150, and 168 to 171 contribute to the NAD(+) site; these read SGETSK, GVIGD, TT, and TLDT. Residues Glu183, His245, and His262 each contribute to the Zn(2+) site.

This sequence belongs to the sugar phosphate cyclases superfamily. Dehydroquinate synthase family. Requires Co(2+) as cofactor. Zn(2+) is required as a cofactor. NAD(+) serves as cofactor.

It is found in the cytoplasm. The enzyme catalyses 7-phospho-2-dehydro-3-deoxy-D-arabino-heptonate = 3-dehydroquinate + phosphate. Its pathway is metabolic intermediate biosynthesis; chorismate biosynthesis; chorismate from D-erythrose 4-phosphate and phosphoenolpyruvate: step 2/7. Its function is as follows. Catalyzes the conversion of 3-deoxy-D-arabino-heptulosonate 7-phosphate (DAHP) to dehydroquinate (DHQ). This chain is 3-dehydroquinate synthase, found in Alkaliphilus oremlandii (strain OhILAs) (Clostridium oremlandii (strain OhILAs)).